The chain runs to 845 residues: Protein P (845 aa).

The segment at Met1 to Gln179 is terminal protein domain (TP). Residues Glu180 to Leu348 form a spacer region. Disordered stretches follow at residues Thr188–Ser211 and Tyr288–Gln317. Polar residues-rich tracts occupy residues Val199–Ser211 and His290–Gly301. Positions Glu349–Gln692 are polymerase/reverse transcriptase domain (RT). Residues Glu359–Ile602 enclose the Reverse transcriptase domain. Residues Asp431, Asp553, and Asp554 each contribute to the Mg(2+) site.

The protein belongs to the hepadnaviridae P protein family.

The catalysed reaction is DNA(n) + a 2'-deoxyribonucleoside 5'-triphosphate = DNA(n+1) + diphosphate. It catalyses the reaction Endonucleolytic cleavage to 5'-phosphomonoester.. Activated by host HSP70 and HSP40 in vitro to be able to bind the epsilon loop of the pgRNA. Because deletion of the RNase H region renders the protein partly chaperone-independent, the chaperones may be needed indirectly to relieve occlusion of the RNA-binding site by this domain. Inhibited by several reverse-transcriptase inhibitors: Lamivudine, Adefovir and Entecavir. Multifunctional enzyme that converts the viral RNA genome into dsDNA in viral cytoplasmic capsids. This enzyme displays a DNA polymerase activity that can copy either DNA or RNA templates, and a ribonuclease H (RNase H) activity that cleaves the RNA strand of RNA-DNA heteroduplexes in a partially processive 3'- to 5'-endonucleasic mode. Neo-synthesized pregenomic RNA (pgRNA) are encapsidated together with the P protein, and reverse-transcribed inside the nucleocapsid. Initiation of reverse-transcription occurs first by binding the epsilon loop on the pgRNA genome, and is initiated by protein priming, thereby the 5'-end of (-)DNA is covalently linked to P protein. Partial (+)DNA is synthesized from the (-)DNA template and generates the relaxed circular DNA (RC-DNA) genome. After budding and infection, the RC-DNA migrates in the nucleus, and is converted into a plasmid-like covalently closed circular DNA (cccDNA). The activity of P protein does not seem to be necessary for cccDNA generation, and is presumably released from (+)DNA by host nuclear DNA repair machinery. The polypeptide is Protein P (Homo sapiens (Human)).